The sequence spans 496 residues: Aldehyde dehydrogenase 1A1 (496 aa).

2 positions are modified to N6-acetyllysine: lysine 86 and lysine 123. Residues 162–165, 188–191, 221–222, and 241–242 each bind NAD(+); these read IPWN, KPAE, GP, and GS. Residue lysine 247 is modified to N6-acetyllysine. Glutamate 264 serves as the catalytic Proton acceptor. Residue 264–266 coordinates NAD(+); it reads ELG. The active-site Nucleophile is the cysteine 298. Residues 331 to 496 form a mediates interaction with PRMT3 region; sequence LAPEVNQGPQ…VTVKISQKNS (166 aa). 344 to 348 serves as a coordination point for NAD(+); the sequence is EQYNK. N6-acetyllysine occurs at positions 348 and 362. Position 395-397 (395-397) interacts with NAD(+); that stretch reads EIF. Lysine 405 is modified (N6-acetyllysine). Phosphoserine is present on serine 408. N6-acetyllysine occurs at positions 414, 430, and 490.

It belongs to the aldehyde dehydrogenase family. As to quaternary structure, homotetramer. Interacts with PRMT3; the interaction is direct, inhibits ALDH1A1 aldehyde dehydrogenase activity and is independent of the methyltransferase activity of PRMT3. In terms of processing, the N-terminus is blocked most probably by acetylation.

It localises to the cytoplasm. Its subcellular location is the cytosol. It is found in the cell projection. The protein localises to the axon. The enzyme catalyses an aldehyde + NAD(+) + H2O = a carboxylate + NADH + 2 H(+). The catalysed reaction is all-trans-retinal + NAD(+) + H2O = all-trans-retinoate + NADH + 2 H(+). It catalyses the reaction 9-cis-retinal + NAD(+) + H2O = 9-cis-retinoate + NADH + 2 H(+). It carries out the reaction 11-cis-retinal + NAD(+) + H2O = 11-cis-retinoate + NADH + 2 H(+). The enzyme catalyses 13-cis-retinal + NAD(+) + H2O = 13-cis-retinoate + NADH + 2 H(+). The catalysed reaction is (E)-4-hydroxynon-2-enal + NAD(+) + H2O = (E)-4-hydroxynon-2-enoate + NADH + 2 H(+). It catalyses the reaction malonaldehyde + NAD(+) + H2O = 3-oxopropanoate + NADH + 2 H(+). It carries out the reaction hexanal + NAD(+) + H2O = hexanoate + NADH + 2 H(+). The enzyme catalyses propanal + NAD(+) + H2O = propanoate + NADH + 2 H(+). The catalysed reaction is 3-deoxyglucosone + NAD(+) + H2O = 2-dehydro-3-deoxy-D-gluconate + NADH + 2 H(+). It catalyses the reaction acetaldehyde + NAD(+) + H2O = acetate + NADH + 2 H(+). It carries out the reaction benzaldehyde + NAD(+) + H2O = benzoate + NADH + 2 H(+). The enzyme catalyses 4-aminobutanal + NAD(+) + H2O = 4-aminobutanoate + NADH + 2 H(+). It participates in cofactor metabolism; retinol metabolism. Its function is as follows. Cytosolic dehydrogenase that catalyzes the irreversible oxidation of a wide range of aldehydes to their corresponding carboxylic acid. Functions downstream of retinol dehydrogenases and catalyzes the oxidation of retinaldehyde into retinoic acid, the second step in the oxidation of retinol/vitamin A into retinoic acid. This pathway is crucial to control the levels of retinol and retinoic acid, two important molecules which excess can be teratogenic and cytotoxic. Also oxidizes aldehydes resulting from lipid peroxidation like (E)-4-hydroxynon-2-enal/HNE, malonaldehyde and hexanal that form protein adducts and are highly cytotoxic. By participating for instance to the clearance of (E)-4-hydroxynon-2-enal/HNE in the lens epithelium prevents the formation of HNE-protein adducts and lens opacification. Functions also downstream of fructosamine-3-kinase in the fructosamine degradation pathway by catalyzing the oxidation of 3-deoxyglucosone, the carbohydrate product of fructosamine 3-phosphate decomposition, which is itself a potent glycating agent that may react with lysine and arginine side-chains of proteins. Also has an aminobutyraldehyde dehydrogenase activity and is probably part of an alternative pathway for the biosynthesis of GABA/4-aminobutanoate in midbrain, thereby playing a role in GABAergic synaptic transmission. This chain is Aldehyde dehydrogenase 1A1, found in Oryctolagus cuniculus (Rabbit).